The sequence spans 52 residues: DNA-directed RNA polymerase subunit Rpo12 (52 aa).

Cysteine 13, cysteine 30, and cysteine 33 together coordinate Zn(2+).

The protein belongs to the archaeal Rpo12/eukaryotic RPC10 RNA polymerase subunit family. Part of the RNA polymerase complex. It depends on Zn(2+) as a cofactor.

The protein localises to the cytoplasm. The catalysed reaction is RNA(n) + a ribonucleoside 5'-triphosphate = RNA(n+1) + diphosphate. Its function is as follows. DNA-dependent RNA polymerase (RNAP) catalyzes the transcription of DNA into RNA using the four ribonucleoside triphosphates as substrates. The sequence is that of DNA-directed RNA polymerase subunit Rpo12 from Pyrobaculum arsenaticum (strain DSM 13514 / JCM 11321 / PZ6).